A 795-amino-acid polypeptide reads, in one-letter code: Lon protease (795 aa).

The Lon N-terminal domain occupies 7-213 (SQILVVRGQV…KIIQAGIEDL (207 aa)). 379–386 (GPPGVGKS) serves as a coordination point for ATP. The Lon proteolytic domain occupies 615 to 795 (VSLPGIVNGM…YSDIYNKLFS (181 aa)). Catalysis depends on residues Ser-702 and Lys-745.

This sequence belongs to the peptidase S16 family. Homohexamer. Organized in a ring with a central cavity.

It localises to the cytoplasm. It carries out the reaction Hydrolysis of proteins in presence of ATP.. Its function is as follows. ATP-dependent serine protease that mediates the selective degradation of mutant and abnormal proteins as well as certain short-lived regulatory proteins. Required for cellular homeostasis and for survival from DNA damage and developmental changes induced by stress. Degrades polypeptides processively to yield small peptide fragments that are 5 to 10 amino acids long. Binds to DNA in a double-stranded, site-specific manner. The protein is Lon protease of Mycoplasma genitalium (strain ATCC 33530 / DSM 19775 / NCTC 10195 / G37) (Mycoplasmoides genitalium).